A 319-amino-acid chain; its full sequence is MLKNKTFKVTWNYISQTTFMYGSKVSFSNGEVTFINPLMPSGLPIHEWLMLKQFSKYKSAPSLPILRRGQHYKLHFDFDATPAGSVYFIIIFYNKNGTKLSTEIVKSNSITIQYPDEAYAYKIKMMNAASTSLIFRCLTITEMTHQYDLEYKSMRVTKIGDDQYGNDMINVIIAEPSDTYPTISNDFLKLFGHVWLVERWMDDNIEGNIKQLKNDLQSQDTLKAINLISYGSKSNVFATYVAQHLGCKVYRTSHEDDDLKGWLTEHVPGNHELKDTNVEVYFKEEQDKHLNYMSRLMNPVRFLDYLDVSKLNGGEVNET.

Belongs to the accessory Sec system protein Asp3 family. In terms of assembly, part of the accessory SecA2/SecY2 protein translocation apparatus required to export cell wall protein SraP.

Its function is as follows. Part of the accessory SecA2/SecY2 system specifically required to export SraP, a serine-rich repeat cell wall protein encoded upstream in the same operon. The chain is Accessory Sec system protein Asp3 (asp3) from Staphylococcus aureus (strain NCTC 8325 / PS 47).